The primary structure comprises 247 residues: MKKILGVIPARYASSRFPGKPLAKIGDKTMIEWTYRNASRSSVLSELVVATDDVRIHEVVQKFGGRSVMTSSDHPSGTDRIIEVANQFSEYSIIVNIQGDEPGIEPELIDGVASLKASHPEWAMSTAAVPLLDFSHAIDFNRVKVIIDRNGKAIYFSRSLIPSQFKTTVPLYRHLGIYGYDRDFLLQYNSLPKSNLEESESLEQLRAIEAGYGIGIYLSKEAGLSVDTPADLEIVIEDFKKRKWISE.

Belongs to the KdsB family.

It is found in the cytoplasm. The enzyme catalyses 3-deoxy-alpha-D-manno-oct-2-ulosonate + CTP = CMP-3-deoxy-beta-D-manno-octulosonate + diphosphate. Its pathway is nucleotide-sugar biosynthesis; CMP-3-deoxy-D-manno-octulosonate biosynthesis; CMP-3-deoxy-D-manno-octulosonate from 3-deoxy-D-manno-octulosonate and CTP: step 1/1. The protein operates within bacterial outer membrane biogenesis; lipopolysaccharide biosynthesis. Its function is as follows. Activates KDO (a required 8-carbon sugar) for incorporation into bacterial lipopolysaccharide in Gram-negative bacteria. This chain is 3-deoxy-manno-octulosonate cytidylyltransferase, found in Leptospira interrogans serogroup Icterohaemorrhagiae serovar Lai (strain 56601).